The following is a 340-amino-acid chain: Glycerol-3-phosphate dehydrogenase [NAD(P)+] (340 aa).

NADPH contacts are provided by Ser-13, Trp-14, and Lys-108. Lys-108, Gly-139, and Ser-141 together coordinate sn-glycerol 3-phosphate. Ala-143 is a binding site for NADPH. Sn-glycerol 3-phosphate-binding residues include Lys-194, Asp-247, Ser-257, Arg-258, and Asn-259. Lys-194 functions as the Proton acceptor in the catalytic mechanism. Arg-258 is a binding site for NADPH. Residues Val-282 and Glu-284 each contribute to the NADPH site.

The protein belongs to the NAD-dependent glycerol-3-phosphate dehydrogenase family.

It is found in the cytoplasm. The catalysed reaction is sn-glycerol 3-phosphate + NAD(+) = dihydroxyacetone phosphate + NADH + H(+). The enzyme catalyses sn-glycerol 3-phosphate + NADP(+) = dihydroxyacetone phosphate + NADPH + H(+). The protein operates within membrane lipid metabolism; glycerophospholipid metabolism. Catalyzes the reduction of the glycolytic intermediate dihydroxyacetone phosphate (DHAP) to sn-glycerol 3-phosphate (G3P), the key precursor for phospholipid synthesis. This is Glycerol-3-phosphate dehydrogenase [NAD(P)+] from Streptococcus thermophilus (strain CNRZ 1066).